The following is a 200-amino-acid chain: dTTP/UTP pyrophosphatase (200 aa).

Residue D72 is the Proton acceptor of the active site.

Belongs to the Maf family. YhdE subfamily. A divalent metal cation serves as cofactor.

The protein localises to the cytoplasm. It carries out the reaction dTTP + H2O = dTMP + diphosphate + H(+). The enzyme catalyses UTP + H2O = UMP + diphosphate + H(+). Its function is as follows. Nucleoside triphosphate pyrophosphatase that hydrolyzes dTTP and UTP. May have a dual role in cell division arrest and in preventing the incorporation of modified nucleotides into cellular nucleic acids. In Pseudomonas savastanoi pv. phaseolicola (strain 1448A / Race 6) (Pseudomonas syringae pv. phaseolicola (strain 1448A / Race 6)), this protein is dTTP/UTP pyrophosphatase.